A 305-amino-acid polypeptide reads, in one-letter code: Probable lipid kinase YegS-like (305 aa).

A DAGKc domain is found at 1-129 (MTQRRAMLIL…VDLGEVGGKL (129 aa)). Residues Thr39, 65 to 71 (GDGTLRD), and Thr92 each bind ATP. Residues Leu210, Asp213, and Leu215 each contribute to the Mg(2+) site. Catalysis depends on Glu268, which acts as the Proton acceptor.

Belongs to the diacylglycerol/lipid kinase family. YegS lipid kinase subfamily. Mg(2+) is required as a cofactor. It depends on Ca(2+) as a cofactor.

It is found in the cytoplasm. In terms of biological role, probably phosphorylates lipids; the in vivo substrate is unknown. This is Probable lipid kinase YegS-like from Pseudomonas syringae pv. syringae (strain B728a).